Reading from the N-terminus, the 479-residue chain is Odorant receptor coreceptor (479 aa).

The Cytoplasmic portion of the chain corresponds to 1–43; the sequence is MMKMKQQGLVADLLPNIRVMKFFGHFVFNYYDDNSSKYLHKIF. A helical transmembrane segment spans residues 44–64; it reads CCVNLFLLLLQFALCAVNLII. The Extracellular portion of the chain corresponds to 65-73; it reads ESADVDDLT. A helical transmembrane segment spans residues 74-94; the sequence is ANTITLLFFTHSIVKIIYFAV. At 95 to 133 the chain is on the cytoplasmic side; the sequence is RSKYFYRTWAIWNNPNSHPLFAESNARYHAIALKKMRLL. Residues 134 to 154 traverse the membrane as a helical segment; it reads LFLVGATTVLSAIAWTVLTFF. Residues 155-190 are Extracellular-facing; sequence EHPIRKLVDPVTNETTIIELPQLLLRSYYPFDASKG. N167 is a glycosylation site (N-linked (GlcNAc...) asparagine). Residues 191 to 211 traverse the membrane as a helical segment; the sequence is IMHVIVLIYQFYWVLFMLIDA. Over 212 to 350 the chain is Cytoplasmic; sequence NSLDVLFCSW…IVRLVTAVGD (139 aa). The tract at residues 261-280 is disordered; sequence SAEHLRESENQPPPPVPPQG. Residues 351–371 traverse the membrane as a helical segment; the sequence is AYGFALLLHMLTTTITLTLLA. Residues 372–383 lie on the Extracellular side of the membrane; that stretch reads YQATKVNGVNVY. A helical transmembrane segment spans residues 384 to 404; it reads AASTIGYIIYTFGQVFLFCIF. Over 405-455 the chain is Cytoplasmic; that stretch reads GNRLIEESTSVMEAAYSCHWYDGSEEAKTFVQIVCQQCQKAMSISGAKFFT. Residues 456–476 form a helical membrane-spanning segment; that stretch reads VSLDLFASVLGAVVTYFMVLV. The Extracellular portion of the chain corresponds to 477-479; that stretch reads QLK.

This sequence belongs to the insect chemoreceptor superfamily. Heteromeric odorant receptor channel (TC 1.A.69) family. Orco subfamily. Heterodimer with conventional odorant receptors (ORs).

The protein resides in the cell membrane. Functionally, odorant coreceptor which complexes with conventional odorant receptors (ORs) to form odorant-sensing units, providing sensitive and prolonged odorant signaling and calcium permeability. Obligate coreceptor of all odorant receptors. Orco is a universal and integral part of the functional odorant receptor, involved in the dendritic localization of other olfactory receptors. Can form functional ion channels in the absence of an odor-binding odorant receptor. Plays a central role in the perception of olfactory stimuli in ants and is essential for ant social organization. Required for pheromone sensing and mating behavior. Also required for the development and maintenance of odorant receptor neurons (ORNs) and of antennal lobe glomeruli. The polypeptide is Odorant receptor coreceptor (Harpegnathos saltator (Jerdon's jumping ant)).